We begin with the raw amino-acid sequence, 341 residues long: Brain-specific homeobox/POU domain protein 3 (341 aa).

Positions 55–65 match the POU-IV box motif; the sequence is RGAEALAAVDI. Residues 182–259 enclose the POU-specific domain; that stretch reads ETETDPRELE…ILEAWLEEAE (78 aa). The segment at residues 277–336 is a DNA-binding region (homeobox); sequence KKRKRTSIAAPEKRSLEAYFAVQPRPSSEKIAAIAEKLDLKKNVVRVWFCNQRQKQKRMK.

It belongs to the POU transcription factor family. Class-4 subfamily.

It is found in the nucleus. May play a role in specifying terminally differentiated neuronal phenotypes. The polypeptide is Brain-specific homeobox/POU domain protein 3 (BRN3) (Gallus gallus (Chicken)).